The sequence spans 285 residues: tRNA pseudouridine synthase B (285 aa).

Catalysis depends on D38, which acts as the Nucleophile.

This sequence belongs to the pseudouridine synthase TruB family. Type 1 subfamily.

The enzyme catalyses uridine(55) in tRNA = pseudouridine(55) in tRNA. Its function is as follows. Responsible for synthesis of pseudouridine from uracil-55 in the psi GC loop of transfer RNAs. The polypeptide is tRNA pseudouridine synthase B (Geobacillus kaustophilus (strain HTA426)).